A 268-amino-acid polypeptide reads, in one-letter code: MPRFRMTVEYDGGPYVGWQRQENGPSVQGAIEAAVLSLTGETVSIRGAGRTDSGVHAMGQVIHADLSKAWSPYQLQNALNAHLRLAGERVSILDVEAVAEFFDARFSALRRHYLYRIVSRRAPLALEAGKAWWVPKVLDHEVMHAAAQRLVGRHDFSTFRAAHCQANSPVRTLDRLDVTRSGELIEIRATAQSFLHNQIRSFAGTLKLAGEGKWTPDDVEAALEARDRKACGPVAPPDGLYFLQVDYPDVIPDRRRPVTDADDGDNLS.

Asp-52 (nucleophile) is an active-site residue. Substrate is bound at residue Tyr-113.

It belongs to the tRNA pseudouridine synthase TruA family. As to quaternary structure, homodimer.

The catalysed reaction is uridine(38/39/40) in tRNA = pseudouridine(38/39/40) in tRNA. Functionally, formation of pseudouridine at positions 38, 39 and 40 in the anticodon stem and loop of transfer RNAs. This chain is tRNA pseudouridine synthase A, found in Rhizobium leguminosarum bv. trifolii (strain WSM2304).